The sequence spans 490 residues: tRNA-guanine(15) transglycosylase (490 aa).

Asp92 functions as the Nucleophile in the catalytic mechanism. The substrate site is built by Asp127 and Ala195. 3 residues coordinate Zn(2+): Cys278, Cys280, and Cys283.

It belongs to the archaeosine tRNA-ribosyltransferase family. Zn(2+) is required as a cofactor.

The enzyme catalyses guanosine(15) in tRNA + 7-cyano-7-deazaguanine = 7-cyano-7-carbaguanosine(15) in tRNA + guanine. Its pathway is tRNA modification; archaeosine-tRNA biosynthesis. Functionally, exchanges the guanine residue with 7-cyano-7-deazaguanine (preQ0) at position 15 in the dihydrouridine loop (D-loop) of archaeal tRNAs. The protein is tRNA-guanine(15) transglycosylase of Haloarcula marismortui (strain ATCC 43049 / DSM 3752 / JCM 8966 / VKM B-1809) (Halobacterium marismortui).